The sequence spans 357 residues: Cyclic AMP-responsive element-binding protein 5 (357 aa).

Residues 114-239 form a disordered region; that stretch reads RQDQTPHHHL…FLERNRAAAT (126 aa). Basic residues-rich tracts occupy residues 120–129 and 138–175; these read HHHLHSHPHQ and PYPHQHQHPAHHPHPQPHHQQNHPHHHSHSHLHAHPAH. A compositionally biased stretch (polar residues) spans 186-195; sequence TGNQAQVSPA. The span at 196 to 206 shows a compositional bias: low complexity; the sequence is TQQMQPTQTIQ. Positions 218 to 235 are enriched in basic and acidic residues; the sequence is VVDEDPDERRRKFLERNR. A bZIP domain is found at 224–287; sequence DERRRKFLER…AQLKQLLLTH (64 aa). Residues 226–246 form a basic motif region; it reads RRRKFLERNRAAATRCRQKRK. A leucine-zipper region spans residues 252–280; it reads LEKKAEELTQTNMQLQNEVSMLKNEVAQL. Residues 298-318 form a disordered region; it reads ESQGYLSPESSPPASPVPACS.

The protein belongs to the bZIP family. In terms of assembly, binds DNA as a homodimer or as a heterodimer with JUN or ATF2/CREBP1.

The protein localises to the nucleus. In terms of biological role, binds to the cAMP response element and activates transcription. The chain is Cyclic AMP-responsive element-binding protein 5 (Creb5) from Mus musculus (Mouse).